We begin with the raw amino-acid sequence, 305 residues long: Acetyl-coenzyme A carboxylase carboxyl transferase subunit beta (305 aa).

One can recognise a CoA carboxyltransferase N-terminal domain in the interval 29–298; sequence LWTKCESCDA…EMKLPLLESS (270 aa). Positions 33, 36, 52, and 55 each coordinate Zn(2+). Residues 33–55 form a C4-type zinc finger; sequence CESCDALTYTKDLQANLMVCLQC.

The protein belongs to the AccD/PCCB family. As to quaternary structure, acetyl-CoA carboxylase is a heterohexamer composed of biotin carboxyl carrier protein (AccB), biotin carboxylase (AccC) and two subunits each of ACCase subunit alpha (AccA) and ACCase subunit beta (AccD). The cofactor is Zn(2+).

The protein localises to the cytoplasm. The catalysed reaction is N(6)-carboxybiotinyl-L-lysyl-[protein] + acetyl-CoA = N(6)-biotinyl-L-lysyl-[protein] + malonyl-CoA. Its pathway is lipid metabolism; malonyl-CoA biosynthesis; malonyl-CoA from acetyl-CoA: step 1/1. In terms of biological role, component of the acetyl coenzyme A carboxylase (ACC) complex. Biotin carboxylase (BC) catalyzes the carboxylation of biotin on its carrier protein (BCCP) and then the CO(2) group is transferred by the transcarboxylase to acetyl-CoA to form malonyl-CoA. The sequence is that of Acetyl-coenzyme A carboxylase carboxyl transferase subunit beta from Synechococcus sp. (strain ATCC 27144 / PCC 6301 / SAUG 1402/1) (Anacystis nidulans).